The following is a 500-amino-acid chain: Lysine--tRNA ligase (500 aa).

Residues E410 and E417 each contribute to the Mg(2+) site.

This sequence belongs to the class-II aminoacyl-tRNA synthetase family. As to quaternary structure, homodimer. Requires Mg(2+) as cofactor.

The protein resides in the cytoplasm. The catalysed reaction is tRNA(Lys) + L-lysine + ATP = L-lysyl-tRNA(Lys) + AMP + diphosphate. This chain is Lysine--tRNA ligase, found in Pseudomonas savastanoi pv. phaseolicola (strain 1448A / Race 6) (Pseudomonas syringae pv. phaseolicola (strain 1448A / Race 6)).